The following is a 293-amino-acid chain: Homeobox protein ceh-24 (293 aa).

Composition is skewed to basic and acidic residues over residues 1-15 (MSEK…KKDE) and 22-38 (QETK…MKIK). Disordered regions lie at residues 1–38 (MSEK…MKIK) and 203–256 (EKEK…SNGV). The segment at residues 144–203 (RRKRRVLFSQAQVYELERRFKQAKYLTAPEREQLANSIRLTPTQVKIWFQNHRYKCKRQE) is a DNA-binding region (homeobox).

The protein belongs to the NK-2 homeobox family. In terms of tissue distribution, expressed in the 8 vulval muscles, 8-10 ventral neurons in the head and in the most posterior pharyngeal muscle cell, m8.

It is found in the nucleus. In terms of biological role, probable transcriptional regulator that is required in neural development for the normal formation of sublateral cholinergic motor neuron processes. Plays a role in regulating the expression of acetylcholine transporter protein unc-17 in the sublateral processes. In particular, it is required in sublateral motor neurons for a left-right turning behavior that occurs during the lethargus phase of the normal sleep process called 'flipping'. During 'flipping' animals rotate 180 degrees about their longitudinal axis. This is Homeobox protein ceh-24 from Caenorhabditis briggsae.